The primary structure comprises 495 residues: Alpha,alpha-trehalose-phosphate synthase [UDP-forming] 56 kDa subunit (495 aa).

Positions 102 and 156 each coordinate D-glucose 6-phosphate. Residues Arg293 and Lys298 each coordinate UDP. Residues Arg293 and Lys298 each contribute to the UDP-alpha-D-glucose site. Arg331 serves as a coordination point for D-glucose 6-phosphate. UDP contacts are provided by residues Ile370 and Leu396–Glu400. UDP-alpha-D-glucose-binding positions include Ile370 and Asp392 to Glu400.

The protein belongs to the glycosyltransferase 20 family. In terms of assembly, the trehalose synthase complex is composed of the two catalytic subunits TPS1 and TPS2 and at least one of the two regulatory subunits TPS3 or TSL1.

It is found in the cytoplasm. The enzyme catalyses D-glucose 6-phosphate + UDP-alpha-D-glucose = alpha,alpha-trehalose 6-phosphate + UDP + H(+). Its pathway is carbohydrate biosynthesis. With respect to regulation, activated by fructose 6-phosphate. Inorganic phosphate inhibits the synthase activity in the complex, but activates the synthase activity in the free monomeric form. In terms of biological role, synthase catalytic subunit of the trehalose synthase complex that catalyzes the production of trehalose from glucose-6-phosphate and UDP-alpha-D-glucose in a two step process. Can function independently of the complex. This Saccharomyces cerevisiae (strain ATCC 204508 / S288c) (Baker's yeast) protein is Alpha,alpha-trehalose-phosphate synthase [UDP-forming] 56 kDa subunit.